We begin with the raw amino-acid sequence, 63 residues long: Venom peptide 2a (63 aa).

Residues 1-22 form the signal peptide; it reads MRGTSFILFAVVVILGFLNANA. AXPX repeat units follow at residues 22–25, 26–29, 32–35, 38–41, and 44–47; these read AEPL, ANPA, ANPD, and ANPE. A propeptide spanning residues 23 to 48 is cleaved from the precursor; that stretch reads EPLANPAPLANPDPLANPDPLANPEA. Leucine 62 carries the leucine amide modification.

As to expression, expressed by the venom gland.

It localises to the secreted. Its subcellular location is the target cell membrane. Its function is as follows. Antimicrobial peptide. Shows activities against Gram-positive bacteria (S.aureus MIC=50 uM and 200 ug/ml, and B.subtilis MIC=200 ug/ml), Gram-negative bacterium E.coli (MIC=100 uM and 200 ug/ml) and fungi (B.cinerea MIC=5 uM, S.cerevisiae MIC=128 ug/ml, S.pombe MIC=128 ug/ml, A.nidulans MIC=128 ug/ml, and C.albicans MIC=64-100 uM). Shows cytolytic activity against insect cell lines. Its hemolytic activity is controversial, as Baek and colleagues report no activity while Bea and colleagues note a hemolytic activity. In vivo, peptide injection in the vicinity of the head and thorax of lepidopteran larvae induces feeding disorder followed by death due to starvation. Is weakly lethal when tested on water flies (D.magna), but is not lethal on lady beetles (H.convergens). The protein is Venom peptide 2a of Eumenes pomiformis (Potter wasp).